A 416-amino-acid polypeptide reads, in one-letter code: Secreted RxLR effector protein 25 (416 aa).

Residues 1–20 form the signal peptide; sequence MRSWLLLLVGLSSYFALSTS. The short motif at 49–88 is the RxLR-dEER element; sequence RKLRAPGGDTNTLKDSGKARREKKVWKLFCRVFLQLDDEK.

The protein belongs to the RxLR effector family.

The protein resides in the secreted. The protein localises to the host cytoplasm. It is found in the host nucleus. Its function is as follows. Effector that partially suppresses the tobacco programmed cell death induced by cell death-inducing proteins. This is Secreted RxLR effector protein 25 from Plasmopara viticola (Downy mildew of grapevine).